We begin with the raw amino-acid sequence, 123 residues long: Large ribosomal subunit protein bL12 (123 aa).

The protein belongs to the bacterial ribosomal protein bL12 family. As to quaternary structure, homodimer. Part of the ribosomal stalk of the 50S ribosomal subunit. Forms a multimeric L10(L12)X complex, where L10 forms an elongated spine to which 2 to 4 L12 dimers bind in a sequential fashion. Binds GTP-bound translation factors.

In terms of biological role, forms part of the ribosomal stalk which helps the ribosome interact with GTP-bound translation factors. Is thus essential for accurate translation. The polypeptide is Large ribosomal subunit protein bL12 (Geobacillus thermodenitrificans (strain NG80-2)).